The chain runs to 337 residues: Inositol 2-dehydrogenase (337 aa).

This sequence belongs to the Gfo/Idh/MocA family. As to quaternary structure, homotetramer.

It catalyses the reaction myo-inositol + NAD(+) = scyllo-inosose + NADH + H(+). In terms of biological role, involved in the oxidation of myo-inositol (MI) to 2-keto-myo-inositol (2KMI or 2-inosose). This Serratia proteamaculans (strain 568) protein is Inositol 2-dehydrogenase.